A 380-amino-acid polypeptide reads, in one-letter code: Cytochrome b (380 aa).

4 helical membrane passes run Phe-34–Met-54, Trp-78–Ile-99, Trp-114–Leu-134, and Phe-179–Thr-199. Residues His-84 and His-98 each coordinate heme b. Heme b is bound by residues His-183 and His-197. Position 202 (His-202) interacts with a ubiquinone. Helical transmembrane passes span Ser-227 to Ser-247, Leu-289 to His-309, Leu-321 to Ser-341, and Phe-348 to Pro-368.

This sequence belongs to the cytochrome b family. As to quaternary structure, the cytochrome bc1 complex contains 11 subunits: 3 respiratory subunits (MT-CYB, CYC1 and UQCRFS1), 2 core proteins (UQCRC1 and UQCRC2) and 6 low-molecular weight proteins (UQCRH/QCR6, UQCRB/QCR7, UQCRQ/QCR8, UQCR10/QCR9, UQCR11/QCR10 and a cleavage product of UQCRFS1). This cytochrome bc1 complex then forms a dimer. Heme b serves as cofactor.

The protein resides in the mitochondrion inner membrane. Component of the ubiquinol-cytochrome c reductase complex (complex III or cytochrome b-c1 complex) that is part of the mitochondrial respiratory chain. The b-c1 complex mediates electron transfer from ubiquinol to cytochrome c. Contributes to the generation of a proton gradient across the mitochondrial membrane that is then used for ATP synthesis. The polypeptide is Cytochrome b (MT-CYB) (Caracara plancus (Southern caracara)).